The primary structure comprises 428 residues: Beta-1,3-galactosyl-O-glycosyl-glycoprotein beta-1,6-N-acetylglucosaminyltransferase (428 aa).

Over 1–9 (MLRNLFRRR) the chain is Cytoplasmic. The tract at residues 5–9 (LFRRR) is mediates interaction with GOLPH3 and is necessary and sufficient for localization to the Golgi. Residues 10–32 (LFSCPTKYYFMLLVLSLITFSVL) form a helical; Signal-anchor for type II membrane protein membrane-spanning segment. Residues 33 to 121 (RIHQKPEFFS…EPLTKEEVGF (89 aa)) are stem region. The Lumenal segment spans residues 33 to 428 (RIHQKPEFFS…RHKALENLEH (396 aa)). Residues asparagine 58 and asparagine 95 are each glycosylated (N-linked (GlcNAc...) asparagine). 4 disulfide bridges follow: cysteine 59–cysteine 413, cysteine 100–cysteine 172, cysteine 151–cysteine 199, and cysteine 372–cysteine 381. A catalytic region spans residues 122 to 428 (PIAYSIVVHH…RHKALENLEH (307 aa)). UDP-N-acetyl-alpha-D-glucosamine contacts are provided by residues 128–130 (VVH), 155–157 (DRK), and tyrosine 187. Residues glutamate 243, asparagine 250, lysine 251, arginine 254, glutamate 320, lysine 341, and tyrosine 358 each coordinate a glycoprotein. Glutamate 320 (nucleophile) is an active-site residue. The UDP-N-acetyl-alpha-D-glucosamine site is built by arginine 378 and lysine 401.

Belongs to the glycosyltransferase 14 family. In terms of assembly, interacts with GOLPH3; may control GCNT1 retention in the Golgi. In terms of processing, N-glycosylated. Expressed in kidney, liver, stomach, spleen, lung and brain.

The protein resides in the golgi apparatus membrane. The enzyme catalyses a 3-O-[beta-D-galactosyl-(1-&gt;3)-N-acetyl-alpha-D-galactosaminyl]-L-seryl-[protein] + UDP-N-acetyl-alpha-D-glucosamine = 3-O-{beta-D-galactosyl-(1-&gt;3)-[N-acetyl-beta-D-glucosaminyl-(1-&gt;6)]-N-acetyl-alpha-D-galactosaminyl}-L-seryl-[protein] + UDP + H(+). It catalyses the reaction a 3-O-[beta-D-galactosyl-(1-&gt;3)-N-acetyl-alpha-D-galactosaminyl]-L-threonyl-[protein] + UDP-N-acetyl-alpha-D-glucosamine = a 3-O-{beta-D-galactosyl-(1-&gt;3)-[N-acetyl-beta-D-glucosaminyl-(1-&gt;6)]-N-acetyl-alpha-D-galactosaminyl}-L-threonyl-[protein] + UDP + H(+). It carries out the reaction a globoside GalGb4Cer + UDP-N-acetyl-alpha-D-glucosamine = a globoside GlcNAc-(beta1-&gt;6)-GalGb4Cer + UDP + H(+). The catalysed reaction is a ganglioside GA1 + UDP-N-acetyl-alpha-D-glucosamine = a ganglioside beta-D-GlcNAc-(1-&gt;6)-GA1 + UDP + H(+). It functions in the pathway protein modification; protein glycosylation. The protein operates within glycolipid biosynthesis. Its activity is regulated as follows. Inactivated by thiol-reactive agents. Inhibited by free UDP. In terms of biological role, glycosyltransferase that catalyzes the transfer of an N-acetylglucosamine (GlcNAc) moiety in beta1-6 linkage from UDP-GlcNAc onto mucin-type core 1 O-glycan to form the branched mucin-type core 2 O-glycan. The catalysis is metal ion-independent and occurs with inversion of the anomeric configuration of sugar donor. Selectively involved in synthesis of mucin-type core 2 O-glycans that serve as scaffolds for the display of selectin ligand sialyl Lewis X epitope by myeloid cells, with an impact on homeostasis and recruitment to inflammatory sites. Can also act on glycolipid substrates. Transfers GlcNAc moiety to GalGb4Cer globosides in a reaction step to the synthesis of stage-specific embryonic antigen 1 (SSEA-1) determinant. Can use Galbeta1-3GalNAcalpha1-R and Galbeta1-3GalNAcbeta1-R oligosaccharide derivatives as acceptor substrates. This is Beta-1,3-galactosyl-O-glycosyl-glycoprotein beta-1,6-N-acetylglucosaminyltransferase (Gcnt1) from Mus musculus (Mouse).